Consider the following 198-residue polypeptide: Ribonuclease HII (198 aa).

In terms of domain architecture, RNase H type-2 spans Arg6–Asn195. 3 residues coordinate a divalent metal cation: Asp12, Glu13, and Asp103.

The protein belongs to the RNase HII family. The cofactor is Mn(2+). Mg(2+) is required as a cofactor.

The protein resides in the cytoplasm. It carries out the reaction Endonucleolytic cleavage to 5'-phosphomonoester.. Endonuclease that specifically degrades the RNA of RNA-DNA hybrids. In Roseobacter denitrificans (strain ATCC 33942 / OCh 114) (Erythrobacter sp. (strain OCh 114)), this protein is Ribonuclease HII.